Reading from the N-terminus, the 311-residue chain is DNA repair and recombination protein RadA (311 aa).

Position 104 to 111 (104 to 111 (GEFGSGKS)) interacts with ATP.

This sequence belongs to the eukaryotic RecA-like protein family.

In terms of biological role, involved in DNA repair and in homologous recombination. Binds and assemble on single-stranded DNA to form a nucleoprotein filament. Hydrolyzes ATP in a ssDNA-dependent manner and promotes DNA strand exchange between homologous DNA molecules. The polypeptide is DNA repair and recombination protein RadA (Methanosphaera stadtmanae (strain ATCC 43021 / DSM 3091 / JCM 11832 / MCB-3)).